Reading from the N-terminus, the 135-residue chain is ATP synthase epsilon chain (135 aa).

Belongs to the ATPase epsilon chain family. In terms of assembly, F-type ATPases have 2 components, CF(1) - the catalytic core - and CF(0) - the membrane proton channel. CF(1) has five subunits: alpha(3), beta(3), gamma(1), delta(1), epsilon(1). CF(0) has three main subunits: a, b and c.

The protein resides in the cell inner membrane. Functionally, produces ATP from ADP in the presence of a proton gradient across the membrane. The chain is ATP synthase epsilon chain from Nitrobacter winogradskyi (strain ATCC 25391 / DSM 10237 / CIP 104748 / NCIMB 11846 / Nb-255).